The sequence spans 243 residues: Terpene cyclase nodB (243 aa).

3 helical membrane passes run isoleucine 19–isoleucine 39, methionine 50–proline 70, and isoleucine 75–isoleucine 95. The N-linked (GlcNAc...) asparagine glycan is linked to asparagine 111. The next 4 helical transmembrane spans lie at isoleucine 112–alanine 132, isoleucine 134–glycine 154, serine 169–leucine 189, and leucine 205–tryptophan 225.

It belongs to the paxB family.

It is found in the membrane. The protein operates within secondary metabolite biosynthesis. Terpene cyclase; part of the gene cluster that mediates the biosynthesis of the indole diterpenes nodulisporic acids (NA). Nodulisporic acid A (NAA) and its chemically modified derivatives are of particular significance because of their highly potent insecticidal activity against blood-feeding arthropods and lack of observable adverse effects on mammals, in particular the tremogenicity associated with the paspaline-derived IDTs is not observed. The geranylgeranyl diphosphate (GGPP) synthase ggs1, localized outside of the cluster, is proposed to catalyze the first step in nodulisporic acid biosynthesis via conversion of farnesyl pyrophosphate and isopentyl pyrophosphate into geranylgeranyl pyrophosphate (GGPP). Condensation of indole-3-glycerol phosphate with GGPP by the prenyl transferase nodC then forms 3-geranylgeranylindole (3-GGI). Epoxidation by the FAD-dependent monooxygenase nodM leads to a single-epoxidized-GGI that is substrate of the terpene cyclase nodB for cyclization to yield emindole SB. The terminal methyl carbon, C28, of emindole SB is then oxidized by the cytochrome P450 monooxygenase nodW to produce nodulisporic acid F (NAF), the pentacyclic core of NAA. NAF is converted to nodulisporic acid E (NAE) via prenylation. This step is probably performed by one of the indole diterpene prenyltransferases nodD1 or nodD2. Several oxidation steps performed by the FAD-linked oxidoreductase nodO and one of the cytochrome P450 monooxygenase nodR, nodX or nodZ further convert NAE to nodulisporic acid D (NAD). NAD is substrate of cytochrome P450 monooxygenase nodJ to produce the precursor of nodulisporic acid C (NAC), converted to NAC by one of the indole diterpene prenyltransferases nodD1 or nodD2. The FAD-dependent monooxygenase nodY2 then oxidizes NAC to nodulisporic acid B (NAB). Finally NAB is converted to NAA by one of the cytochrome P450 monooxygenases nodR, nodX or nodZ. In Hypoxylon pulicicidum, this protein is Terpene cyclase nodB.